A 102-amino-acid chain; its full sequence is RNA-binding protein Hfq (102 aa).

Positions 9 to 68 (DPFLNALRRERVPVSIYLVNGIKLQGQIESFDQFVILLKNTVSQMVYKHAISTVVPSRPV) constitute a Sm domain. Residues 63–102 (VPSRPVSHHSNNAGGGTSSNYHHGSSAQNTSAQQDSEETE) form a disordered region. The span at 70-96 (HHSNNAGGGTSSNYHHGSSAQNTSAQQ) shows a compositional bias: polar residues.

This sequence belongs to the Hfq family. In terms of assembly, homohexamer.

Functionally, RNA chaperone that binds small regulatory RNA (sRNAs) and mRNAs to facilitate mRNA translational regulation in response to envelope stress, environmental stress and changes in metabolite concentrations. Also binds with high specificity to tRNAs. The sequence is that of RNA-binding protein Hfq from Escherichia fergusonii (strain ATCC 35469 / DSM 13698 / CCUG 18766 / IAM 14443 / JCM 21226 / LMG 7866 / NBRC 102419 / NCTC 12128 / CDC 0568-73).